Reading from the N-terminus, the 129-residue chain is Histone H2A.J (129 aa).

The disordered stretch occupies residues 1 to 22 (MSGRGKQGGKVRAKAKSRSSRA). N6-acetyllysine is present on residues Lys6 and Lys10. Residues 7–19 (QGGKVRAKAKSRS) are compositionally biased toward basic residues. Lys10 is subject to N6-lactoyllysine; alternate. Gln105 is modified (N5-methylglutamine). Thr121 carries the phosphothreonine; by DCAF1 modification.

It belongs to the histone H2A family. In terms of assembly, the nucleosome is a histone octamer containing two molecules each of H2A, H2B, H3 and H4 assembled in one H3-H4 heterotetramer and two H2A-H2B heterodimers. The octamer wraps approximately 147 bp of DNA. In terms of processing, monoubiquitination of Lys-120 (H2AXK119ub) gives a specific tag for epigenetic transcriptional repression. Following DNA double-strand breaks (DSBs), it is ubiquitinated through 'Lys-63' linkage of ubiquitin moieties. Post-translationally, glutamine methylation at Gln-105 (H2AQ104me) by FBL is specifically dedicated to polymerase I. It is present at 35S ribosomal DNA locus and impairs binding of the FACT complex. Phosphorylation on Ser-2 (H2AS1ph) is enhanced during mitosis. Phosphorylation on Ser-2 by RPS6KA5/MSK1 directly represses transcription. Acetylation of H3 inhibits Ser-2 phosphorylation by RPS6KA5/MSK1. Phosphorylation at Thr-121 (H2AT120ph) by DCAF1 is present in the regulatory region of many tumor suppresor genes and down-regulates their transcription.

It localises to the nucleus. It is found in the chromosome. Functionally, core component of nucleosome. Nucleosomes wrap and compact DNA into chromatin, limiting DNA accessibility to the cellular machineries which require DNA as a template. Histones thereby play a central role in transcription regulation, DNA repair, DNA replication and chromosomal stability. DNA accessibility is regulated via a complex set of post-translational modifications of histones, also called histone code, and nucleosome remodeling. The chain is Histone H2A.J from Macaca fascicularis (Crab-eating macaque).